The following is a 334-amino-acid chain: Short-chain dehydrogenase/reductase (334 aa).

Residues leucine 44, lysine 68, aspartate 93, asparagine 120, and lysine 152 each coordinate NADP(+). Residues serine 176 and tyrosine 205 each act as proton donor in the active site. Positions 205, 209, and 239 each coordinate NADP(+). The Lowers pKa of active site Tyr role is filled by lysine 209.

This sequence belongs to the short-chain dehydrogenases/reductases (SDR) family.

It participates in mycotoxin biosynthesis. Short-chain dehydrogenase/reductase; part of the 2 gene clusters that mediate the biosynthesis of fusicoccins, diterpene glucosides that display phytohormone-like activity and function as potent activators of plasma membrane H(+)-ATPases in plants by modifying 14-3-3 proteins and cause the plant disease constriction canker. The first step in the pathway is performed by the fusicoccadiene synthase PaFS that possesses both prenyl transferase and terpene cyclase activity, converting isopentenyl diphosphate and dimethylallyl diphosphate into geranylgeranyl diphosphate (GGDP) and successively converting GGDP into fusicocca-2,10(14)-diene, a precursor for fusicoccin H. The second step is the oxidation at the C-8 position by the cytochrome P450 monooxygenase PaP450-2 to yield fusicocca-2,10(14)-diene-8-beta-ol. The cytochrome P450 monooxygenase PaP450-1 then catalyzes the hydroxylation at the C-16 position to produce fusicocca-2,10(14)-diene-8-beta,16-diol. The dioxygenase fc-dox then catalyzes the 16-oxydation of fusicocca-2,10(14)-diene-8-beta,16-diol to yield an aldehyde (8-beta-hydroxyfusicocca-1,10(14)-dien-16-al). The short-chain dehydrogenase/reductase fc-sdr catalyzes the reduction of the aldehyde to yield fusicocca-1,10(14)-diene-8-beta,16-diol. The next step is the hydroxylation at C-9 performed by the cytochrome P450 monooxygenase PaP450-3 that leads to fusicoccin H aglycon which is glycosylated to fusicoccin H by the O-glycosyltransferase PaGT. Hydroxylation at C-12 by the cytochrome P450 monooxygenase PaP450-4 leads then to the production of fusicoccin Q and is followed by methylation by the O-methyltransferase PaMT to yield fusicoccin P. Fusicoccin P is further converted to fusicoccin J via prenylation by the O-glucose prenyltransferase PaPT. Cytochrome P450 monooxygenase PaP450-5 then performs hydroxylation at C-19 to yield dideacetyl-fusicoccin A which is acetylated to 3'-O-deacetyl-fusicoccin A by the O-acetyltransferase PaAT-2. Finally, a another acetylation by the O-acetyltransferase PaAT-1 yields fusicoccin A. The polypeptide is Short-chain dehydrogenase/reductase (Phomopsis amygdali (Fusicoccum amygdali)).